The following is a 724-amino-acid chain: Tripartite terminase subunit 1 (724 aa).

The C3H1-type zinc finger occupies 175–203 (CAVCFEELCVTANQGEATHRRLLGCVCDH). A disordered region spans residues 410–445 (GGDDADADGGAAGGADAGDGGVGDEDGPGAPPPADA). Residues 419–430 (GAAGGADAGDGG) are compositionally biased toward gly residues. 652 to 659 (FRSVFHCG) lines the ATP pocket.

It belongs to the herpesviridae TRM1 protein family. As to quaternary structure, associates with TRM2 and TRM3 to form the tripartite terminase complex. Interacts with portal protein.

It localises to the host nucleus. Component of the molecular motor that translocates viral genomic DNA in empty capsid during DNA packaging. Forms a tripartite terminase complex together with TRM2 and TRM3 in the host cytoplasm. Once the complex reaches the host nucleus, it interacts with the capsid portal vertex. This portal forms a ring in which genomic DNA is translocated into the capsid. TRM1 carries an endonuclease activity that plays an important role for the cleavage of concatemeric viral DNA into unit length genomes. The protein is Tripartite terminase subunit 1 of Suid herpesvirus 1 (strain Indiana-Funkhauser / Becker) (SuHV-1).